Here is a 289-residue protein sequence, read N- to C-terminus: ADP-dependent (S)-NAD(P)H-hydrate dehydratase (289 aa).

A YjeF C-terminal domain is found at valine 9–leucine 286. The (6S)-NADPHX site is built by alanine 44 and histidine 160. AMP is bound by residues lysine 197 to serine 201 and glycine 226. A (6S)-NADPHX-binding site is contributed by aspartate 227.

The protein belongs to the NnrD/CARKD family. In terms of assembly, homotetramer. The cofactor is Mg(2+).

It catalyses the reaction (6S)-NADHX + ADP = AMP + phosphate + NADH + H(+). It carries out the reaction (6S)-NADPHX + ADP = AMP + phosphate + NADPH + H(+). Its function is as follows. Catalyzes the dehydration of the S-form of NAD(P)HX at the expense of ADP, which is converted to AMP. Together with NAD(P)HX epimerase, which catalyzes the epimerization of the S- and R-forms, the enzyme allows the repair of both epimers of NAD(P)HX, a damaged form of NAD(P)H that is a result of enzymatic or heat-dependent hydration. This Xanthomonas campestris pv. campestris (strain ATCC 33913 / DSM 3586 / NCPPB 528 / LMG 568 / P 25) protein is ADP-dependent (S)-NAD(P)H-hydrate dehydratase.